The following is a 165-amino-acid chain: Sorting nexin-12 (165 aa).

A disordered region spans residues 1 to 20 (MSDTAVADTRRLNSKPQDLT). At S2 the chain carries N-acetylserine. Residue Y23 is modified to Phosphotyrosine. Residues 28 to 151 (NFLEIDIFNP…HMFLQEEAID (124 aa)) form the PX domain. A 1,2-diacyl-sn-glycero-3-phospho-(1D-myo-inositol-3-phosphate)-binding residues include R71, S73, K96, and R118. Phosphoserine is present on S73.

It belongs to the sorting nexin family.

The protein localises to the membrane. Functionally, may be involved in several stages of intracellular trafficking. The sequence is that of Sorting nexin-12 (Snx12) from Mus musculus (Mouse).